The sequence spans 206 residues: Large ribosomal subunit protein eL13y (206 aa).

The tract at residues 182–206 (LERTNKRHAGARAKRAADAEKEEKK) is disordered. Positions 186 to 195 (NKRHAGARAK) are enriched in basic residues. Residues 196 to 206 (RAADAEKEEKK) are compositionally biased toward basic and acidic residues.

Belongs to the eukaryotic ribosomal protein eL13 family.

This is Large ribosomal subunit protein eL13y from Brassica napus (Rape).